A 159-amino-acid polypeptide reads, in one-letter code: 3-hydroxyacyl-[acyl-carrier-protein] dehydratase FabZ (159 aa).

The active site involves H58.

Belongs to the thioester dehydratase family. FabZ subfamily.

It localises to the cytoplasm. It carries out the reaction a (3R)-hydroxyacyl-[ACP] = a (2E)-enoyl-[ACP] + H2O. In terms of biological role, involved in unsaturated fatty acids biosynthesis. Catalyzes the dehydration of short chain beta-hydroxyacyl-ACPs and long chain saturated and unsaturated beta-hydroxyacyl-ACPs. The chain is 3-hydroxyacyl-[acyl-carrier-protein] dehydratase FabZ from Helicobacter pylori (strain J99 / ATCC 700824) (Campylobacter pylori J99).